The primary structure comprises 168 residues: T-cell surface glycoprotein CD3 delta chain (168 aa).

An N-terminal signal peptide occupies residues 1 to 21; it reads MEHSRFLSCLILAALLSQVNP. The Extracellular portion of the chain corresponds to 22–102; it reads RILKVLEPED…CVELDTATLA (81 aa). A disulfide bridge connects residues cysteine 37 and cysteine 74. N-linked (GlcNAc...) asparagine glycans are attached at residues asparagine 38 and asparagine 56. Residues 103-123 form a helical membrane-spanning segment; the sequence is GMIITDIIATVLLALGVYCFA. Residues 124 to 168 are Cytoplasmic-facing; it reads GHETGRFSRAADTQALMGNDQLYQPLRERNDAQYSRLGDKWARNK. The 29-residue stretch at 135–163 folds into the ITAM domain; it reads DTQALMGNDQLYQPLRERNDAQYSRLGDK. Phosphotyrosine occurs at positions 146 and 157.

In terms of assembly, the TCR-CD3 complex is composed of a CD3D/CD3E and a CD3G/CD3E heterodimers that preferentially associate with TCRalpha and TCRbeta, respectively, to form TCRalpha/CD3E/CD3G and TCRbeta/CD3G/CD3E trimers. In turn, the hexamer interacts with CD3Z homodimer to form the TCR-CD3 complex. Alternatively, TCRalpha and TCRbeta can be replaced by TCRgamma and TCRdelta. Interacts with coreceptors CD4 and CD8. In terms of processing, phosphorylated on Tyr residues after T-cell receptor triggering by LCK in association with CD4/CD8. As to expression, CD3D is mostly present on T-lymphocytes with its TCR-CD3 partners. Present also in fetal NK-cells.

The protein resides in the cell membrane. Its function is as follows. Part of the TCR-CD3 complex present on T-lymphocyte cell surface that plays an essential role in adaptive immune response. When antigen presenting cells (APCs) activate T-cell receptor (TCR), TCR-mediated signals are transmitted across the cell membrane by the CD3 chains CD3D, CD3E, CD3G and CD3Z. All CD3 chains contain immunoreceptor tyrosine-based activation motifs (ITAMs) in their cytoplasmic domain. Upon TCR engagement, these motifs become phosphorylated by Src family protein tyrosine kinases LCK and FYN, resulting in the activation of downstream signaling pathways. In addition of this role of signal transduction in T-cell activation, CD3D plays an essential role in thymocyte differentiation. Indeed, participates in correct intracellular TCR-CD3 complex assembly and surface expression. In absence of a functional TCR-CD3 complex, thymocytes are unable to differentiate properly. Interacts with CD4 and CD8 and thus serves to establish a functional link between the TCR and coreceptors CD4 and CD8, which is needed for activation and positive selection of CD4 or CD8 T-cells. This chain is T-cell surface glycoprotein CD3 delta chain (CD3D), found in Bos taurus (Bovine).